The chain runs to 109 residues: Nucleoid-associated protein CC_0268 (109 aa).

It belongs to the YbaB/EbfC family. As to quaternary structure, homodimer.

Its subcellular location is the cytoplasm. The protein localises to the nucleoid. Its function is as follows. Binds to DNA and alters its conformation. May be involved in regulation of gene expression, nucleoid organization and DNA protection. The chain is Nucleoid-associated protein CC_0268 from Caulobacter vibrioides (strain ATCC 19089 / CIP 103742 / CB 15) (Caulobacter crescentus).